The primary structure comprises 555 residues: Protein PLASTID TRANSCRIPTIONALLY ACTIVE 12, chloroplastic (555 aa).

The N-terminal 58 residues, 1 to 58 (MASCYNPWRLFPGMSTAVPAGPVTAPAHSRTCKSSKVFSALPHRRGLLFLGTRRARIK), are a transit peptide targeting the chloroplast. 3 disordered regions span residues 80–100 (YFDS…SIPG), 115–167 (ARAP…EPDV), and 468–541 (SYNE…IDDS). Polar residues predominate over residues 144 to 154 (QVTSASGTEGA). Acidic residues-rich tracts occupy residues 471–480 (EDSDDEDEDV) and 490–502 (LEDE…DVAE). The span at 508–519 (NQNWSALKSTGQ) shows a compositional bias: polar residues. The segment covering 521–538 (EKPKEKSKKDEMTLKEAI) has biased composition (basic and acidic residues).

Component of the plastid-encoded plastid RNA polymerase (PEP) complex.

The protein localises to the plastid. It localises to the chloroplast stroma. Its subcellular location is the nucleus. Functionally, required for the activity of the plastid-encoded RNA polymerase (PEP) and full expression of genes transcribed by PEP. Required for the proper build-up and formation of the PEP-complex. Binds single-stranded (ss) DNA and RNA, but not double-stranded (ds) DNA. This is Protein PLASTID TRANSCRIPTIONALLY ACTIVE 12, chloroplastic from Zea mays (Maize).